The chain runs to 488 residues: 2,3-bisphosphoglycerate-independent phosphoglycerate mutase (488 aa).

Residue Ser-10 is the Phosphoserine intermediate of the active site. Mn(2+) is bound at residue Ser-10. Substrate-binding positions include His-69, 99–100 (RD), Arg-135, Arg-142, 215–218 (RADR), and Lys-290. Residues Asp-359, His-363, Asp-400, His-401, and His-430 each coordinate Mn(2+).

It belongs to the BPG-independent phosphoglycerate mutase family. In terms of assembly, monomer. Requires Mn(2+) as cofactor.

The protein localises to the cytoplasm. The catalysed reaction is (2R)-2-phosphoglycerate = (2R)-3-phosphoglycerate. Its pathway is carbohydrate degradation; glycolysis; pyruvate from D-glyceraldehyde 3-phosphate: step 3/5. Functionally, catalyzes the interconversion of 2-phosphoglycerate and 3-phosphoglycerate. This chain is 2,3-bisphosphoglycerate-independent phosphoglycerate mutase, found in Prunus dulcis (Almond).